The following is a 405-amino-acid chain: Pyruvate decarboxylase 2 (405 aa).

Residues 232-314 (DSWFNCQKLK…FLINNGGYTI (83 aa)) form a thiamine pyrophosphate binding region. 3 residues coordinate Mg(2+): D282, N309, and G311. Residue E315 coordinates substrate.

It belongs to the TPP enzyme family. Homotetramer. The cofactor is a metal cation. Requires thiamine diphosphate as cofactor.

The enzyme catalyses a 2-oxocarboxylate + H(+) = an aldehyde + CO2. The chain is Pyruvate decarboxylase 2 (PDC2) from Pisum sativum (Garden pea).